Consider the following 877-residue polypeptide: Putative leucine-rich repeat receptor-like serine/threonine-protein kinase At2g19230 (877 aa).

The N-terminal stretch at 1–24 (MGNFNFLPLVSFASFVVVLVLVCA) is a signal peptide. The Extracellular portion of the chain corresponds to 25–517 (QDQSGFVSID…RNKKTERKEY (493 aa)). N-linked (GlcNAc...) asparagine glycosylation is found at asparagine 142, asparagine 233, asparagine 261, asparagine 295, asparagine 405, and asparagine 420. LRR repeat units lie at residues 439–462 (PLQK…ANLP) and 463–484 (DLTE…KLLE). The helical transmembrane segment at 518-538 (IIPSVASVTGLFFLLLALISF) threads the bilayer. The Cytoplasmic portion of the chain corresponds to 539-877 (WQFKKRQQSV…VDPGVLPQPR (339 aa)). The region spanning 569–842 (NNFERVLGQG…QVVAELKESL (274 aa)) is the Protein kinase domain. Residues 575–583 (LGQGGFGKV) and lysine 596 contribute to the ATP site. Residue tyrosine 641 is modified to Phosphotyrosine. Catalysis depends on aspartate 692, which acts as the Proton acceptor. Serine 726 is modified (phosphoserine). A phosphothreonine mark is found at threonine 727 and threonine 732.

Belongs to the protein kinase superfamily. Ser/Thr protein kinase family.

Its subcellular location is the cell membrane. The enzyme catalyses L-seryl-[protein] + ATP = O-phospho-L-seryl-[protein] + ADP + H(+). It carries out the reaction L-threonyl-[protein] + ATP = O-phospho-L-threonyl-[protein] + ADP + H(+). The sequence is that of Putative leucine-rich repeat receptor-like serine/threonine-protein kinase At2g19230 from Arabidopsis thaliana (Mouse-ear cress).